The primary structure comprises 340 residues: MAELYYDNQADLNRLKNKPIAIIGFGSQGHAHARNLADSGLDVRVGLYPGSKSWAKVEAAGLKVMTVAEAAREAQIVMILTPDIGQADLYREHIAPAMEPGKTLMFAHGFNIRFGQIIPPQGIDVSMVAPKAPGHRVREVFVQGGGVPALIAVEQDATGGAFEDALAYAKGLGCTRAGVLRTTFAEETETDLFGEQVVLCGGVSALVKAAFETLVEAGYQPEVAYFECMHELKLIVDLFYQGGLNYMRYSVSDTAEWGDYTAGPKIITDQTRAAMRQILADIQSGAFAEDWIDENHNGRPRFNAYRQADINHPIEQIGRELRRMMPFVNPREVKPGEGGA.

The region spanning 2–182 (AELYYDNQAD…GCTRAGVLRT (181 aa)) is the KARI N-terminal Rossmann domain. NADP(+)-binding positions include 25-28 (FGSQ), S51, S53, and 83-86 (DIGQ). Residue H108 is part of the active site. Residue G134 coordinates NADP(+). One can recognise a KARI C-terminal knotted domain in the interval 183–328 (TFAEETETDL…RELRRMMPFV (146 aa)). Residues D191, E195, E227, and E231 each contribute to the Mg(2+) site. S252 is a binding site for substrate.

The protein belongs to the ketol-acid reductoisomerase family. Requires Mg(2+) as cofactor.

It catalyses the reaction (2R)-2,3-dihydroxy-3-methylbutanoate + NADP(+) = (2S)-2-acetolactate + NADPH + H(+). The enzyme catalyses (2R,3R)-2,3-dihydroxy-3-methylpentanoate + NADP(+) = (S)-2-ethyl-2-hydroxy-3-oxobutanoate + NADPH + H(+). It functions in the pathway amino-acid biosynthesis; L-isoleucine biosynthesis; L-isoleucine from 2-oxobutanoate: step 2/4. The protein operates within amino-acid biosynthesis; L-valine biosynthesis; L-valine from pyruvate: step 2/4. Involved in the biosynthesis of branched-chain amino acids (BCAA). Catalyzes an alkyl-migration followed by a ketol-acid reduction of (S)-2-acetolactate (S2AL) to yield (R)-2,3-dihydroxy-isovalerate. In the isomerase reaction, S2AL is rearranged via a Mg-dependent methyl migration to produce 3-hydroxy-3-methyl-2-ketobutyrate (HMKB). In the reductase reaction, this 2-ketoacid undergoes a metal-dependent reduction by NADPH to yield (R)-2,3-dihydroxy-isovalerate. The polypeptide is Ketol-acid reductoisomerase (NADP(+)) (Chloroflexus aurantiacus (strain ATCC 29366 / DSM 635 / J-10-fl)).